The sequence spans 466 residues: Argininosuccinate lyase (466 aa).

It belongs to the lyase 1 family. Argininosuccinate lyase subfamily.

The protein localises to the cytoplasm. The catalysed reaction is 2-(N(omega)-L-arginino)succinate = fumarate + L-arginine. Its pathway is amino-acid biosynthesis; L-arginine biosynthesis; L-arginine from L-ornithine and carbamoyl phosphate: step 3/3. This chain is Argininosuccinate lyase, found in Ehrlichia ruminantium (strain Gardel).